The following is a 559-amino-acid chain: Formate--tetrahydrofolate ligase (559 aa).

ATP is bound at residue 68–75 (TPAGEGKT).

This sequence belongs to the formate--tetrahydrofolate ligase family.

It carries out the reaction (6S)-5,6,7,8-tetrahydrofolate + formate + ATP = (6R)-10-formyltetrahydrofolate + ADP + phosphate. Its pathway is one-carbon metabolism; tetrahydrofolate interconversion. The chain is Formate--tetrahydrofolate ligase from Rhizobium johnstonii (strain DSM 114642 / LMG 32736 / 3841) (Rhizobium leguminosarum bv. viciae).